A 126-amino-acid polypeptide reads, in one-letter code: Small ribosomal subunit protein bS6 (126 aa).

The tract at residues 107–126 is disordered; that stretch reads RDRERGERSERPRDDFAPAA.

Belongs to the bacterial ribosomal protein bS6 family.

Functionally, binds together with bS18 to 16S ribosomal RNA. The polypeptide is Small ribosomal subunit protein bS6 (Caulobacter sp. (strain K31)).